Reading from the N-terminus, the 116-residue chain is MPKFNPKQMKDLERMLGLKTEQLNAVKVTIELQDKILVIDNPVVVKMLAQGQEVFSVMGSAREESKQQQKVEIKEEDVKFIMEQTGKSEKEAREALEKSNGDIAKAILALTEGENK.

The 65-residue stretch at 6–70 (PKQMKDLERM…AREESKQQQK (65 aa)) folds into the NAC-A/B domain.

Belongs to the NAC-alpha family. As to quaternary structure, homodimer. Interacts with the ribosome. Binds ribosomal RNA.

Contacts the emerging nascent chain on the ribosome. The chain is Nascent polypeptide-associated complex protein from Sulfolobus acidocaldarius (strain ATCC 33909 / DSM 639 / JCM 8929 / NBRC 15157 / NCIMB 11770).